A 492-amino-acid polypeptide reads, in one-letter code: 3-octaprenyl-4-hydroxybenzoate carboxy-lyase (492 aa).

Asn-175 is a Mn(2+) binding site. Prenylated FMN contacts are provided by residues 178–180, 192–194, and 197–198; these read IYR, RWL, and RG. A Mn(2+)-binding site is contributed by Glu-241. Asp-290 (proton donor) is an active-site residue.

This sequence belongs to the UbiD family. In terms of assembly, homohexamer. Requires prenylated FMN as cofactor. Mn(2+) serves as cofactor.

The protein localises to the cell membrane. It catalyses the reaction a 4-hydroxy-3-(all-trans-polyprenyl)benzoate + H(+) = a 2-(all-trans-polyprenyl)phenol + CO2. It functions in the pathway cofactor biosynthesis; ubiquinone biosynthesis. In terms of biological role, catalyzes the decarboxylation of 3-octaprenyl-4-hydroxy benzoate to 2-octaprenylphenol, an intermediate step in ubiquinone biosynthesis. This Salmonella paratyphi A (strain ATCC 9150 / SARB42) protein is 3-octaprenyl-4-hydroxybenzoate carboxy-lyase.